A 78-amino-acid chain; its full sequence is Mitochondrial import inner membrane translocase subunit Tim9 (78 aa).

The Twin CX3C motif motif lies at 24–48 (CFTSCVNEFGSRTVNAKEESCANNC). Intrachain disulfides connect cysteine 24–cysteine 48 and cysteine 28–cysteine 44.

This sequence belongs to the small Tim family. Heterohexamer; composed of 3 copies of tim-9/tin-9.1 and 3 copies of tim-10/tin-10, named soluble 70 kDa complex. The complex associates with the tim-22 component of the TIM22 complex. Interacts with multi-pass transmembrane proteins in transit.

It localises to the mitochondrion inner membrane. Mitochondrial intermembrane chaperone that participates in the import and insertion of multi-pass transmembrane proteins into the mitochondrial inner membrane. May also be required for the transfer of beta-barrel precursors from the TOM complex to the sorting and assembly machinery (SAM complex) of the outer membrane. Acts as a chaperone-like protein that protects the hydrophobic precursors from aggregation and guide them through the mitochondrial intermembrane space. This Caenorhabditis briggsae protein is Mitochondrial import inner membrane translocase subunit Tim9 (tin-9.1).